The primary structure comprises 380 residues: 3-isopropylmalate dehydratase large subunit (380 aa).

3 residues coordinate [4Fe-4S] cluster: cysteine 262, cysteine 320, and cysteine 323.

It belongs to the aconitase/IPM isomerase family. LeuC type 2 subfamily. In terms of assembly, heterodimer of LeuC and LeuD. [4Fe-4S] cluster is required as a cofactor.

It carries out the reaction (2R,3S)-3-isopropylmalate = (2S)-2-isopropylmalate. It participates in amino-acid biosynthesis; L-leucine biosynthesis; L-leucine from 3-methyl-2-oxobutanoate: step 2/4. Functionally, catalyzes the isomerization between 2-isopropylmalate and 3-isopropylmalate, via the formation of 2-isopropylmaleate. The sequence is that of 3-isopropylmalate dehydratase large subunit from Thermococcus kodakarensis (strain ATCC BAA-918 / JCM 12380 / KOD1) (Pyrococcus kodakaraensis (strain KOD1)).